The sequence spans 206 residues: MSSRRRVLLKVIILGDSGVGKTSLMNQFVNRKFSNQYKATIGADFLTKEVQIDDRIFTLQIWDTAGQERFQSLGVAFYRGADCCVLVYDVNVMKSFDNLNNWREEFLIQASPSDPENFPFVVLGNKTDVDGGKSRVVSEKKAKAWCASKGNIPYFETSAKEGFNVDAAFECITKNAFKNEPEEEPYLPDTIDVAGGQQQRSTGCEC.

Residue 15-22 (GDSGVGKT) coordinates GTP. The Effector region signature appears at 37 to 45 (YKATIGADF). GTP-binding positions include 63–67 (DTAGQ), 125–128 (NKTD), and 158–159 (SA). 2 S-geranylgeranyl cysteine lipidation sites follow: cysteine 204 and cysteine 206. Cysteine 206 bears the Cysteine methyl ester mark.

This sequence belongs to the small GTPase superfamily. Rab family.

The protein resides in the cell membrane. In terms of biological role, intracellular vesicle trafficking and protein transport. The sequence is that of Ras-related protein RABG3d (RABG3D) from Arabidopsis thaliana (Mouse-ear cress).